The following is a 2228-amino-acid chain: MNMSRQGIFQTVGSGLDHILSLADVEEEQMIQSVDRTAVTGASYFTSVDQSSVHTAEVGSHQPEPLKTSVDKPGSKRTQGEKFFLIHSADWLTTHALFHEVAKLDVVKLLYNEQFAVQGLLRYHTYARFGIEIQVQINPTPFQQGGLICAMVPGDQSYGSIASLTVYPHGLLNCNINNVVRIKVPFIYTRGAYHFKDPQYPVWELTIRVWSELNIGTGTSAYTSLNVLARFTDLELHGLTPLSTQMMRNEFRVSTTENVVNLSNYEDARAKMSFALDQEDWKSDASQGGGIKITHFTTWTSIPTLAAQFPFNASDSVGQQIKVIPVDPYFFQMTNTNPEQKCITALASICQMFCFWRGDLVFDFQVFPTKYHSGRLLFCFVPGNELIDVSHITLKQATTAPCAVMDITGVQSTLRFRVPWISDTPYRVNRYTKSSHQKGEYTAIGKLIVYCYNRLTSPSNVASHVRVNVYLSAINLECFAPLYHAMDVTTQVGDDSGGFSTTVSTKQNVPDPQVGITTVKDLKGRANQGKMDISGVQAPVGAITTIEDPVLAKKVPETFPELKPGESRHTSDHMSIYKFMGRSHFLCTFTFNSNNKEYTFPITLSSTSNPPHGLPSTLRWFFNLFQLYRGPLDLTIIITGATDVDGMAWFTPVGLAVDTPWVEKESALSIDYKTALGAVRFNTRRTGNIQIRLPWYSYLYAVSGALDGLGDKTDSTFGLVSIQIANYNHSDEYLSFSCYLSVTEQSEFYFPRAPLNTNAMMSSETMMDRIALGDLESSVDDPRSEEDRKFESHIEKRKPYKELRLEVGKQRLKYAQEELSNEVLPPPRKIKGVFSQAKISLFYTEDHEIMKFSWKGITADTRALRRFGFSLAAGRSVWTLEMDAGVLTGRLVRVNDEKWTEMKDDKIVSLVEKFTSNKHWSKVNFPHGMLDLEEIAANAKEFPNMSETDLCFLLHWLNPKKINLADRMLGLSGIQEIKEKGVGLIGECRAFLDSITSTLKSMMFGFHHSVTVEIINTVLCFVKSGILLYVIQQLNQEEHSHIIGLLRVMNYADIGCSVISCGKVFSKMLETVFNWQMDSRMMELRTQSISNWLRDICSGITIFKSFKDAIYWLYTKIREYYDLNYGNKKDVLNILKDHQQKIERAIEEADNFCVLQIQDVEKFEQYQKGVDLIQKLRTVHSMAQVDPGLTVHLAPLRDCIARVHQKLKNLGSINQAMVPRCEPVVCYLYGKRGGGKSLTSIALATKICKHYGVEPEKNIYTKPVASDYWDGYSGQLVCIIDDIGQNTTDEDWSDFCQLVSGCPMRLNMASLEEKGRHFSSPFIIATSNWSNPSPKTVYVKEAIDRRLHFKVEVKPASFFKNPHNDMLNVNLAKTNDAIKDMSCVDLVMDNHNVSLSELLSSLVMTVEIRKQNMSEFMELWSQGLSDDDNDSAVAEFFQSFPSGEPSGSRLSQFFQSVTNHKWVAVGAAVGVLGVLVGGWYVYKHFTKKQEESIPSEGVYHGVTKPKQVIKLDADPVESQSTLEIAGLVRKNLVQFGVGEKNGCVRWVMNALGIKDDWLLVPSHAYKFEKDYEMMEFYFNRGGTYYSISAGNVVIQSLDVGFQDVVLMKVPTIPKFRDITEHFIKKSDVPRALNRLATLVTTVNGTPMLISEGPLKMEEKATYVHKKNDGTTIDLTVDQAWRGKGEGLPGMCGGALISSNQSIQNAILGIHVAGGNSILVAKLVTQEMFQNIDKKIVESQRIMKVEFTQCSMNVVSKTLFRKSPIHHHIDKNMINFPAVMPFSRAEIDPMAVMLSKYSLPIVDEPDDYKDVSVFFQNKILGKSPLVDDFLDIEMAITGAPGIDAINMDSSPGYPYVQEKLTKRDLIWLDDNGMFLGLHPRLAQRILFNTTMMENCSDLDVVFTTCPKDELRPLDKVLESKTRAIDSCPLDYTILCRMYWGPAISYFHLNPGFHTGVAIGIDPDRQWDQLFKTMIRFGDVGLDLDFSAFDASLSPFMIREAGRILTEMSGAPVHFGEALINTIIYSKHLLYNCCYHVCGSMPSGSPCTALLNSIINNVNLYYVFSKIFKKSPVFFCDAVRILCYGDDVLIVFSRQVQIDNLDSIGQRIVDEFKKLGMTATSADKSVPQLKPVSELTFLKRSFNLVEDRIRPAIAEKTIWSLVAWQRNNAEFEQNLENAQWFAFMHGYEFYQQFYHFVQSCLEKEMIEYRLKSYDWWRMKFNDQCFVCDLS.

The segment at 55–76 (TAEVGSHQPEPLKTSVDKPGSK) is disordered. 2 short sequence motifs ((L)YPX(n)L motif) span residues 167-171 (YPHGL) and 200-205 (YPVWEL). An involved in P1-2A pentamerization region spans residues 766 to 836 (MMDRIALGDL…PRKIKGVFSQ (71 aa)). The chain crosses the membrane as a helical span at residues 1011–1031 (TVEIINTVLCFVKSGILLYVI). Residues 1043-1070 (IGLLRVMNYADIGCSVISCGKVFSKMLE) are membrane-penetrating ability. Residues 1127–1153 (NKKDVLNILKDHQQKIERAIEEADNFC) adopt a coiled-coil conformation. The SF3 helicase domain maps to 1204–1366 (HQKLKNLGSI…SFFKNPHNDM (163 aa)). 1230 to 1237 (GKRGGGKS) serves as a coordination point for ATP. A helical transmembrane segment spans residues 1462-1482 (WVAVGAAVGVLGVLVGGWYVY). Tyr1499 is modified (O-(5'-phospho-RNA)-tyrosine). A Peptidase C3 domain is found at 1514 to 1728 (DPVESQSTLE…VAKLVTQEMF (215 aa)). Catalysis depends on for protease 3C activity residues His1563, Asp1603, and Cys1691. One can recognise a RdRp catalytic domain in the interval 1977-2098 (DVGLDLDFSA…VFSRQVQIDN (122 aa)).

Belongs to the picornaviridae polyprotein family. Homodimer. Homomultimer; probably interacts with membranes in a multimeric form. Seems to assemble into amyloid-like fibers. As to quaternary structure, homodimer. Monomer. Interacts with protein 3CD. In terms of assembly, interacts with host ACBD3. Interacts with protein 3AB. As to quaternary structure, interacts with human MAVS. In terms of assembly, homodimer; disulfide-linked. Homopentamer. Homooligomer. As to quaternary structure, interacts with capsid protein VP2. Interacts with capsid protein VP3. In terms of assembly, interacts with capsid protein VP1. Interacts with capsid protein VP3. Interacts with capsid protein VP1. Interacts with capsid protein VP2. In terms of processing, specific enzymatic cleavages by viral protease in vivo yield a variety of precursors and mature proteins. Polyprotein processing intermediates are produced, such as P1-2A which is a functional precursor of the structural proteins, VP0 which is a VP4-VP2 precursor, VP1-2A precursor, 3ABC precursor which is a stable and catalytically active precursor of 3A, 3B and 3C proteins, 3AB and 3CD precursors. The assembly signal 2A is removed from VP1-2A by a host protease, possibly host Cathepsin L. This cleavage occurs over a region of 3 amino-acids probably generating VP1 proteins with heterogeneous C-termini. Post-translationally, during virion maturation, immature virions are rendered infectious following cleavage of VP0 into VP4 and VP2. This maturation seems to be an autocatalytic event triggered by the presence of RNA in the capsid and is followed by a conformational change of the particle. The assembly signal 2A is removed from VP1-2A by a host protease, possibly host Cathepsin L in naked virions. This cleavage does not occur in enveloped virions. This cleavage occurs over a region of 3 amino-acids probably generating VP1 proteins with heterogeneous C-termini. In terms of processing, VPg is uridylylated prior to priming replication into VPg-pUpU. Post-translationally, unlike other picornaviruses, does not seem to be myristoylated.

Its subcellular location is the virion. It is found in the host endosome. It localises to the host multivesicular body. The protein localises to the host membrane. The protein resides in the host mitochondrion outer membrane. Its subcellular location is the host cytoplasm. It is found in the host cytoplasmic vesicle membrane. The enzyme catalyses RNA(n) + a ribonucleoside 5'-triphosphate = RNA(n+1) + diphosphate. It carries out the reaction a ribonucleoside 5'-triphosphate + H2O = a ribonucleoside 5'-diphosphate + phosphate + H(+). The catalysed reaction is Selective cleavage of Gln-|-Gly bond in the poliovirus polyprotein. In other picornavirus reactions Glu may be substituted for Gln, and Ser or Thr for Gly.. In terms of biological role, capsid proteins VP1, VP2, and VP3 form a closed capsid enclosing the viral positive strand RNA genome. All these proteins contain a beta-sheet structure called beta-barrel jelly roll. Together they form an icosahedral capsid (T=3) composed of 60 copies of each VP1, VP2, and VP3, with a diameter of approximately 300 Angstroms. VP1 is situated at the 12 fivefold axes, whereas VP2 and VP3 are located at the quasi-sixfold axes. The naked capsid interacts with the host receptor HAVCR1 to provide virion attachment to and probably entry into the target cell. VP0 precursor is a component of the immature procapsids. Functionally, plays a role in the assembly of the 12 pentamers into an icosahedral structure. Has not been detected in mature virions, supposedly owing to its small size. Its function is as follows. Precursor component of immature procapsids that corresponds to an extended form of the structural protein VP1. After maturation, possibly by the host Cathepsin L, the assembly signal 2A is cleaved to give rise to the mature VP1 protein. In terms of biological role, functions as a viroporin. Affects membrane integrity and causes an increase in membrane permeability. Involved in host intracellular membrane rearrangements probably to give rise to the viral factories. Does not disrupt calcium homeostasis or glycoprotein trafficking. Antagonizes the innate immune response of the host by suppressing IFN-beta synthesis, which it achieves by interfering with the RIG-I/IFIH1 pathway. Affects membrane integrity and causes an increase in membrane permeability. Functionally, associates with and induces structural rearrangements of intracellular membranes. Displays RNA-binding activity. Its function is as follows. The precursor 3ABC is targeted to the mitochondrial membrane where protease 3C activity cleaves and inhibits the host antiviral protein MAVS, thereby disrupting activation of IRF3 through the IFIH1/MDA5 pathway. In vivo, the protease activity of 3ABC precursor is more efficient in cleaving the 2BC precursor than that of protein 3C. The 3ABC precursor may therefore play a role in the proteolytic processing of the polyprotein. Possible viroporin. In terms of biological role, interacts with the 3CD precursor and with RNA structures found at both the 5'- and 3'-termini of the viral genome. Since the 3AB precursor contains the hydrophobic domain 3A, it probably anchors the whole viral replicase complex to intracellular membranes on which viral RNA synthesis occurs. May serve as membrane anchor to the 3AB and 3ABC precursors via its hydrophobic domain. May interact with RNA. Functionally, acts as a primer for viral RNA replication and remains covalently bound to viral genomic RNA. VPg is uridylylated prior to priming replication into VPg-pUpU. The VPg-pUpU is then used as primer on the genomic RNA poly(A) by the RNA-dependent RNA polymerase to replicate the viral genome. Its function is as follows. Cysteine protease that generates mature viral proteins from the precursor polyprotein. In addition to its proteolytic activity, it binds to viral RNA, and thus influences viral genome replication. RNA and substrate bind cooperatively to the protease. Cleaves IKBKG/NEMO to impair innate immune signaling. Cleaves host PABPC1 which may participate in the switch of viral translation to RNA synthesis. In terms of biological role, interacts with the 3AB precursor and with RNA structures found at both the 5'- and 3'-termini of the viral genome. Disrupts TLR3 signaling by degrading the host adapter protein TICAM1/TRIF. RNA-directed RNA polymerase 3D-POL replicates genomic and antigenomic RNA by recognizing replications specific signals. This Human hepatitis A virus genotype IIIA (isolate NOR-21) (HHAV) protein is Genome polyprotein.